We begin with the raw amino-acid sequence, 286 residues long: uncharacterized protein (286 aa).

4 disordered regions span residues 1 to 38 (MSQK…EDDV), 108 to 146 (HTGE…RRHK), 196 to 227 (RTQK…KTRL), and 241 to 286 (DVDD…PRSS). Residues 18-29 (SSSKQVLSSTSS) are compositionally biased toward low complexity. A compositionally biased stretch (basic and acidic residues) spans 243-268 (DDQKKDGSGEEKKEKKSAEKEKKISH). Over residues 269–278 (ENVQSLSPSS) the composition is skewed to polar residues.

This is an uncharacterized protein from Caenorhabditis elegans.